The following is a 364-amino-acid chain: Histidinol-phosphate aminotransferase 1 (364 aa).

N6-(pyridoxal phosphate)lysine is present on lysine 211.

It belongs to the class-II pyridoxal-phosphate-dependent aminotransferase family. Histidinol-phosphate aminotransferase subfamily. Homodimer. It depends on pyridoxal 5'-phosphate as a cofactor.

The enzyme catalyses L-histidinol phosphate + 2-oxoglutarate = 3-(imidazol-4-yl)-2-oxopropyl phosphate + L-glutamate. It functions in the pathway amino-acid biosynthesis; L-histidine biosynthesis; L-histidine from 5-phospho-alpha-D-ribose 1-diphosphate: step 7/9. The sequence is that of Histidinol-phosphate aminotransferase 1 from Legionella pneumophila (strain Paris).